Here is a 401-residue protein sequence, read N- to C-terminus: Mannonate dehydratase (401 aa).

The protein belongs to the mannonate dehydratase family. Requires Fe(2+) as cofactor. Mn(2+) is required as a cofactor.

The catalysed reaction is D-mannonate = 2-dehydro-3-deoxy-D-gluconate + H2O. It functions in the pathway carbohydrate metabolism; pentose and glucuronate interconversion. Functionally, catalyzes the dehydration of D-mannonate. The protein is Mannonate dehydratase of Brucella canis (strain ATCC 23365 / NCTC 10854 / RM-666).